The chain runs to 273 residues: Tryptase-2 (273 aa).

The first 18 residues, 1–18 (MLHLLALALLLSLVSAAP), serve as a signal peptide directing secretion. Residues 19–28 (APGQALQRSG) constitute a propeptide, activation peptide. The region spanning 29-270 (IIGGKEAPGS…YLDWIHQYVP (242 aa)) is the Peptidase S1 domain. Residues cysteine 57 and cysteine 73 are joined by a disulfide bond. Active-site charge relay system residues include histidine 72 and aspartate 119. 3 disulfides stabilise this stretch: cysteine 153–cysteine 228, cysteine 186–cysteine 209, and cysteine 218–cysteine 246. Catalysis depends on serine 222, which acts as the Charge relay system. N-linked (GlcNAc...) asparagine glycosylation is present at asparagine 231.

It belongs to the peptidase S1 family. Tryptase subfamily. As to quaternary structure, homotetramer.

Its subcellular location is the secreted. The catalysed reaction is Preferential cleavage: Arg-|-Xaa, Lys-|-Xaa, but with more restricted specificity than trypsin.. Functionally, tryptase is the major neutral protease present in mast cells and is secreted upon the coupled activation-degranulation response of this cell type. The chain is Tryptase-2 from Ovis aries (Sheep).